Consider the following 616-residue polypeptide: Large ribosomal subunit assembly factor BipA (616 aa).

Positions 8 to 204 (KKLRNIAIIA…AIVKHVEPPK (197 aa)) constitute a tr-type G domain. Residues 20–25 (DHGKTT) and 134–137 (NKVD) contribute to the GTP site.

The protein belongs to the TRAFAC class translation factor GTPase superfamily. Classic translation factor GTPase family. BipA subfamily. In terms of assembly, monomer.

It localises to the cytoplasm. The catalysed reaction is GTP + H2O = GDP + phosphate + H(+). Functionally, a 50S ribosomal subunit assembly protein with GTPase activity, required for 50S subunit assembly at low temperatures, may also play a role in translation. Binds GTP and analogs. Binds the 70S ribosome between the 30S and 50S subunits, in a similar position as ribosome-bound EF-G; it contacts a number of ribosomal proteins, both rRNAs and the A-site tRNA. The chain is Large ribosomal subunit assembly factor BipA from Haemophilus influenzae (strain ATCC 51907 / DSM 11121 / KW20 / Rd).